A 22-amino-acid polypeptide reads, in one-letter code: leu leader peptide (22 aa).

Positions 1–22 (MLHHMTSRANLLLLRRGGSQRS) are disordered. The segment covering 11-22 (LLLLRRGGSQRS) has biased composition (low complexity).

Its function is as follows. Involved in control of the biosynthesis of leucine. The protein is leu leader peptide (leuL) of Corynebacterium glutamicum (strain ATCC 13032 / DSM 20300 / JCM 1318 / BCRC 11384 / CCUG 27702 / LMG 3730 / NBRC 12168 / NCIMB 10025 / NRRL B-2784 / 534).